Consider the following 239-residue polypeptide: Lysophospholipase-like protein 1 (239 aa).

Position 2 is an N-acetylalanine (Ala2). Residues Ser125, Asp180, and His212 each act as charge relay system in the active site.

The protein belongs to the AB hydrolase superfamily. AB hydrolase 2 family.

It localises to the cytoplasm. The protein localises to the cytosol. The catalysed reaction is S-hexadecanoyl-L-cysteinyl-[protein] + H2O = L-cysteinyl-[protein] + hexadecanoate + H(+). Palmitoyl thioesterase that catalyzes depalmitoylation of CGAS and KCNMA1. Acts as a regulator of innate immunity by mediating depalmitoylation of CGAS, thereby preventing CGAS homodimerization and cyclic GMP-AMP synthase activity. Does not exhibit phospholipase nor triacylglycerol lipase activity, able to hydrolyze only short chain substrates due to its shallow active site. In Mus musculus (Mouse), this protein is Lysophospholipase-like protein 1.